A 1040-amino-acid chain; its full sequence is DIS3-like exonuclease 1 (1040 aa).

Positions 232 to 310 constitute a CSD1 domain; sequence AGIKSGRYKQ…KGRTGALCEN (79 aa). The CSD2 domain maps to 360-426; it reads VLVMPWDYRI…AEIATILVEN (67 aa). Positions 459 to 808 constitute an RNB domain; sequence RLDLRETHLV…VHRLLLAAVN (350 aa).

It belongs to the RNR ribonuclease family. Component of the RNA exosome complex. Mg(2+) serves as cofactor.

Its subcellular location is the cytoplasm. The catalysed reaction is Exonucleolytic cleavage in the 3'- to 5'-direction to yield nucleoside 5'-phosphates.. Functionally, catalytic component of the RNA exosome complex which has 3'-&gt;5' exoribonuclease activity and participates in a multitude of cellular RNA processing and degradation events. This is DIS3-like exonuclease 1 (dis3l) from Xenopus laevis (African clawed frog).